A 352-amino-acid chain; its full sequence is Macrophage-capping protein (352 aa).

Met-1 is modified (N-acetylmethionine). The Gelsolin-like 1 repeat unit spans residues 27–75 (EKLKPVPIARESHGIFFSGDSYLVLHNGPEEASHLHLWIGQQSSRDEQG). A Nuclear localization signal motif is present at residues 139-148 (RKLYQVKGKK). Gelsolin-like repeat units follow at residues 150–190 (IRAT…LERN) and 265–311 (MNLT…KERQ). Residue Ser-341 is modified to Phosphoserine.

Belongs to the villin/gelsolin family. As to quaternary structure, interacts with NUP62. Interacts with NUTF2 and RAN; involved in CAPG nuclear import. Post-translationally, phosphorylated. Nuclear GCAP39 is more highly phosphorylated than cytoplasmic GCAP39. Present in a large variety of tissues and is particularly abundant in kidney and lung. Highly expressed in macrophages (at protein level).

It localises to the nucleus. It is found in the cytoplasm. The protein resides in the melanosome. Its subcellular location is the cell projection. The protein localises to the lamellipodium. It localises to the ruffle. In terms of biological role, calcium-sensitive protein which reversibly blocks the barbed ends of actin filaments but does not sever preformed actin filaments. May play an important role in macrophage function. May play a role in regulating cytoplasmic and/or nuclear structures through potential interactions with actin. May bind DNA. Uncapping occurs either when Ca(2+) falls or when the concentration of polyphosphoinositide rises, both at low and high Ca(2+). The chain is Macrophage-capping protein (Capg) from Mus musculus (Mouse).